A 208-amino-acid polypeptide reads, in one-letter code: Uracil phosphoribosyltransferase (208 aa).

Residues Arg-78, Arg-103, and 130-138 (DPMLATGGS) contribute to the 5-phospho-alpha-D-ribose 1-diphosphate site. Uracil contacts are provided by residues Ile-193 and 198-200 (GDA). Residue Asp-199 coordinates 5-phospho-alpha-D-ribose 1-diphosphate.

The protein belongs to the UPRTase family. Mg(2+) serves as cofactor.

It catalyses the reaction UMP + diphosphate = 5-phospho-alpha-D-ribose 1-diphosphate + uracil. It participates in pyrimidine metabolism; UMP biosynthesis via salvage pathway; UMP from uracil: step 1/1. With respect to regulation, allosterically activated by GTP. Functionally, catalyzes the conversion of uracil and 5-phospho-alpha-D-ribose 1-diphosphate (PRPP) to UMP and diphosphate. The chain is Uracil phosphoribosyltransferase from Haemophilus influenzae (strain 86-028NP).